Reading from the N-terminus, the 266-residue chain is MQNYLDLLKKVLEEGEETKDRTGVGTRRIFGPQLRFKFEGNKIPIITTKRVFMKGVIIELLWFLQGSTNIKFLLENNVHIWDEWADDMGELGPVYGKQWRAWETKEGNKIDQISNIVNTLRNNPASRRIILNAWNVGEIDQMHLPPCHMMCQFSVNSKGGIITHLYQRSADLFLGVPFNISSYAILTRLLAMHSGLHASELIMTFGDAHIYNNHIEQVKLQLSREPLEQTTELFIDNRPNIFSHVYEDFKLEGYKYYPTIKAEVAV.

Residues Arg21 and 127–128 contribute to the dUMP site; that span reads RR. Catalysis depends on Cys147, which acts as the Nucleophile. DUMP-binding positions include 168–171, Asn179, and 209–211; these read RSAD and HIY. Asp171 is a binding site for (6R)-5,10-methylene-5,6,7,8-tetrahydrofolate. A (6R)-5,10-methylene-5,6,7,8-tetrahydrofolate-binding site is contributed by Ala265.

It belongs to the thymidylate synthase family. Bacterial-type ThyA subfamily. As to quaternary structure, homodimer.

It is found in the cytoplasm. It carries out the reaction dUMP + (6R)-5,10-methylene-5,6,7,8-tetrahydrofolate = 7,8-dihydrofolate + dTMP. Its pathway is pyrimidine metabolism; dTTP biosynthesis. Its function is as follows. Catalyzes the reductive methylation of 2'-deoxyuridine-5'-monophosphate (dUMP) to 2'-deoxythymidine-5'-monophosphate (dTMP) while utilizing 5,10-methylenetetrahydrofolate (mTHF) as the methyl donor and reductant in the reaction, yielding dihydrofolate (DHF) as a by-product. This enzymatic reaction provides an intracellular de novo source of dTMP, an essential precursor for DNA biosynthesis. In Brachyspira hyodysenteriae (strain ATCC 49526 / WA1), this protein is Thymidylate synthase.